A 396-amino-acid polypeptide reads, in one-letter code: uncharacterized protein (396 aa).

The protein belongs to the mycobacterial PPE family.

This is an uncharacterized protein from Mycobacterium tuberculosis (strain ATCC 25618 / H37Rv).